Here is a 95-residue protein sequence, read N- to C-terminus: TBK1 inhibitor DP96R (95 aa).

Belongs to the asfivirus DP96R family.

Inhibits cGAS-STING-mediated type I IFN expression and NF-kB activation by inhibiting TBK1 and IKBKB/IKKB. Inhibits host TBK1 phosphorylation. This chain is TBK1 inhibitor DP96R, found in Ornithodoros (relapsing fever ticks).